The sequence spans 69 residues: Brevinin-1CG1 (69 aa).

The first 22 residues, 1-22 (MFTMKKSLLLLFFLGTINLSLC), serve as a signal peptide directing secretion. Positions 23 to 43 (EQERNAEEERRDDDEMDVEVE) are cleaved as a propeptide — removed in mature form. An intrachain disulfide couples Cys-63 to Cys-69.

Expressed by the skin glands.

It is found in the secreted. Functionally, antimicrobial peptide. Active against Gram-positive bacteria R.rhodochrous X15 and B.licheniformis X39 and against Gram-negative bacterium E.coli ATCC 25922. Has antifungal activity against a slime mold isolate. Has weak hemolytic activity against human erythrocytes. The sequence is that of Brevinin-1CG1 from Amolops chunganensis (Chungan torrent frog).